Here is a 219-residue protein sequence, read N- to C-terminus: Translation initiation factor IF-3 (219 aa).

It belongs to the IF-3 family. As to quaternary structure, monomer.

Its subcellular location is the cytoplasm. Its function is as follows. IF-3 binds to the 30S ribosomal subunit and shifts the equilibrium between 70S ribosomes and their 50S and 30S subunits in favor of the free subunits, thus enhancing the availability of 30S subunits on which protein synthesis initiation begins. The sequence is that of Translation initiation factor IF-3 from Prochlorococcus marinus (strain MIT 9303).